A 21-amino-acid polypeptide reads, in one-letter code: Complement receptor 3-related protein (21 aa).

The protein resides in the secreted. In terms of biological role, plays a role in adherence of C.albicans to buccal epithelial cells, and in biofilm formation. The sequence is that of Complement receptor 3-related protein from Candida albicans (Yeast).